Here is a 273-residue protein sequence, read N- to C-terminus: Putative carboxypeptidase YodJ (273 aa).

Residues 1–23 form the signal peptide; sequence MKKSGKWFSLAAALSVTAIVGAG. A lipid anchor (N-palmitoyl cysteine) is attached at cysteine 24. Cysteine 24 is lipidated: S-diacylglycerol cysteine. Residues 27-58 are disordered; the sequence is SNGDAQKDTKTTAETKQTEQKTADSKKSNTQN. Over residues 31-53 the composition is skewed to basic and acidic residues; that stretch reads AQKDTKTTAETKQTEQKTADSKK.

It belongs to the peptidase M15B family.

The protein localises to the cell membrane. This Bacillus subtilis (strain 168) protein is Putative carboxypeptidase YodJ (yodJ).